Consider the following 89-residue polypeptide: MKKGIHPENYREVLFYDGSVQMGWIIRSCAATTKTMVWEDGKEYPFYPLDTSSASHPVYTGKRREVNTEGRASKFNERFKGMAGLAAKK.

The protein belongs to the bacterial ribosomal protein bL31 family. Type B subfamily. In terms of assembly, part of the 50S ribosomal subunit.

In Actinobacillus pleuropneumoniae serotype 5b (strain L20), this protein is Large ribosomal subunit protein bL31B.